We begin with the raw amino-acid sequence, 161 residues long: Protein-export protein SecB (161 aa).

The protein belongs to the SecB family. In terms of assembly, homotetramer, a dimer of dimers. One homotetramer interacts with 1 SecA dimer.

The protein localises to the cytoplasm. One of the proteins required for the normal export of preproteins out of the cell cytoplasm. It is a molecular chaperone that binds to a subset of precursor proteins, maintaining them in a translocation-competent state. It also specifically binds to its receptor SecA. The protein is Protein-export protein SecB of Shewanella baltica (strain OS155 / ATCC BAA-1091).